A 460-amino-acid polypeptide reads, in one-letter code: Protein unc-93 homolog A (460 aa).

Helical transmembrane passes span Ile7–Leu27, Ser41–Ile61, Trp68–Ser88, Trp89–Ala109, and Leu139–Phe159. N-linked (GlcNAc...) asparagine glycosylation is found at Asn168 and Asn189. 6 helical membrane passes run Thr203–Leu223, Phe292–Gly312, Ile321–Trp341, Pro345–Trp365, Leu390–Val410, and Leu412–Leu432.

It belongs to the unc-93 family.

It localises to the membrane. The sequence is that of Protein unc-93 homolog A (unc93a) from Xenopus laevis (African clawed frog).